The chain runs to 616 residues: Chaperone protein HscA homolog (616 aa).

It belongs to the heat shock protein 70 family.

Chaperone involved in the maturation of iron-sulfur cluster-containing proteins. Has a low intrinsic ATPase activity which is markedly stimulated by HscB. The protein is Chaperone protein HscA homolog of Histophilus somni (strain 129Pt) (Haemophilus somnus).